The primary structure comprises 417 residues: Equilibrative nucleotide transporter 7 (417 aa).

11 helical membrane passes run 19–39, 54–74, 84–104, 110–130, 143–163, 184–204, 264–284, 293–315, 326–346, 353–373, and 392–412; these read LVCC…LTIT, VLTI…ATKE, IFGY…DLAS, VVAY…DAFV, PDFI…TSVL, LFIG…TLVF, LGIN…GFLY, GDWY…RFIP, KWIT…YFTA, WMLF…VCIF, and MCVF…LWLI.

Belongs to the SLC29A/ENT transporter (TC 2.A.57) family. In terms of tissue distribution, expressed in leaves and flowers.

Its subcellular location is the cell membrane. Functionally, nucleoside transporter that can mediate uptake of adenosine, uridine, guanosine or cytidine when expressed in a heterologous system (yeast). This is Equilibrative nucleotide transporter 7 (ENT7) from Arabidopsis thaliana (Mouse-ear cress).